The sequence spans 309 residues: Homoserine O-succinyltransferase (309 aa).

The Acyl-thioester intermediate role is filled by Cys142. The substrate site is built by Lys163 and Ser192. His235 acts as the Proton acceptor in catalysis. The active site involves Glu237. A substrate-binding site is contributed by Arg249.

The protein belongs to the MetA family. Homodimer.

The protein localises to the cytoplasm. The catalysed reaction is L-homoserine + succinyl-CoA = O-succinyl-L-homoserine + CoA. Its pathway is amino-acid biosynthesis; L-methionine biosynthesis via de novo pathway; O-succinyl-L-homoserine from L-homoserine: step 1/1. Transfers a succinyl group from succinyl-CoA to L-homoserine, forming succinyl-L-homoserine. The protein is Homoserine O-succinyltransferase of Escherichia fergusonii (strain ATCC 35469 / DSM 13698 / CCUG 18766 / IAM 14443 / JCM 21226 / LMG 7866 / NBRC 102419 / NCTC 12128 / CDC 0568-73).